A 170-amino-acid polypeptide reads, in one-letter code: RxLR effector protein PITG_07555 (170 aa).

An N-terminal signal peptide occupies residues 1–17 (MQAYHLLLVCMYISCSA). A RxLR-dEER motif is present at residues 50 to 62 (RALRTHNPDREER).

This sequence belongs to the RxLR effector family.

Its subcellular location is the secreted. It localises to the host cytoplasm. It is found in the host nucleus. Its function is as follows. Effector that enhances P.infestans colonization of Nicotiana benthamiana leaves. This chain is RxLR effector protein PITG_07555, found in Phytophthora infestans (strain T30-4) (Potato late blight agent).